A 228-amino-acid chain; its full sequence is uncharacterized protein (228 aa).

The interval 194–228 is disordered; that stretch reads SRRADEHPAPSTEPHAAAVAPEPDFMAEPIPALEE.

This is an uncharacterized protein from Treponema pallidum (strain Nichols).